We begin with the raw amino-acid sequence, 471 residues long: Glutamate--tRNA ligase (471 aa).

The short motif at 9–19 (PSPTGYLHVGG) is the 'HIGH' region element. Zn(2+) contacts are provided by Cys-98, Cys-100, Cys-125, and His-127. Positions 237 to 241 (KLSKR) match the 'KMSKS' region motif. Lys-240 contacts ATP.

This sequence belongs to the class-I aminoacyl-tRNA synthetase family. Glutamate--tRNA ligase type 1 subfamily. In terms of assembly, monomer. Zn(2+) serves as cofactor.

The protein localises to the cytoplasm. The enzyme catalyses tRNA(Glu) + L-glutamate + ATP = L-glutamyl-tRNA(Glu) + AMP + diphosphate. Catalyzes the attachment of glutamate to tRNA(Glu) in a two-step reaction: glutamate is first activated by ATP to form Glu-AMP and then transferred to the acceptor end of tRNA(Glu). The polypeptide is Glutamate--tRNA ligase (Shigella boydii serotype 4 (strain Sb227)).